A 241-amino-acid polypeptide reads, in one-letter code: Ribulose-phosphate 3-epimerase 2 (241 aa).

S21 lines the substrate pocket. A divalent metal cation contacts are provided by H46, D48, and H79. D48 functions as the Proton acceptor in the catalytic mechanism. Substrate-binding positions include H79, 155 to 158, 192 to 194, and 214 to 215; these read GFGG, DGG, and GS. D192 contacts a divalent metal cation. Catalysis depends on D192, which acts as the Proton donor.

The protein belongs to the ribulose-phosphate 3-epimerase family. It depends on a divalent metal cation as a cofactor.

The enzyme catalyses D-ribulose 5-phosphate = D-xylulose 5-phosphate. It participates in carbohydrate degradation. Functionally, catalyzes the reversible epimerization of D-ribulose 5-phosphate to D-xylulose 5-phosphate. The protein is Ribulose-phosphate 3-epimerase 2 of Cupriavidus necator (strain ATCC 17699 / DSM 428 / KCTC 22496 / NCIMB 10442 / H16 / Stanier 337) (Ralstonia eutropha).